The following is a 783-amino-acid chain: MHWKFSNFRKYHLSFHLNLFDLSLFFISFYCFPILYICFFNQVHSFRSTQPSLIMNKFDLFDDYSTKGSTIPLPNENFDQLFLSSEANDMEFLFNETLMGLQDLDVPSGYGIPQNTINNDFQHTPNKSKSHSRQYSGTAIFGFADHNKDLSINGVNNDLCKQSNKAINTQSVSPGELLKRSRGSQTPTPTSALPDTAQDILDFNFEEKPILLLEEDELEEEKHKQQQRMMTQSSPLKRVTTPSQSPFVQQPQTMKQRKPHKKTNEYIVANENPNSYKFPPSPSPTAKRQQYPPSSPIPYNPKSDSVGGNSYSAKYLQSLNKTQQIEYVDDIEPLLQEDNNNMKYIPIPVQEPMSYQKQKPVTPPLQSQNDSQQLEPLKTPQPQPKQQQQQQQPNNEQDKEFTANFNFNTFLPPPTPPNLINGSPDWNSSPEPHSPSPGRLQPPQQISPIHQNLGAMGNNINFYTPMYYELPVQAEQPQPQPQPHQQQHQQQQHQPELQNTYQQIKHIQQQQQMLQHQFHNQNNQLRQQHPNQFQNQNQNQNQNQTKTPYSQQSQFSPTHSNFNLSPAKQLNSNVGSMHLSPLKKQLPNTPTKQPPVTIEWSPVISPNSKQPLHKQIKESSPRRRIKKTSLLPPGELDNYWTGPDEDKIYTCTYKNCGKKFTRRYNVRSHIQTHLSDRPFGCQFCPKRFVRQHDLNRHVKGHIEARYSKCPCGKEFARLDALRKHQDRNICVGGNKNVISKPTKKKGTNNTQQQLLKTDTVVERIEKQLLQEDKSVTEEFLMLQ.

Disordered stretches follow at residues 166-195, 219-311, 355-452, 474-497, and 535-624; these read AINTQSVSPGELLKRSRGSQTPTPTSALPD, EEEK…GNSY, YQKQ…IHQN, AEQPQPQPQPHQQQHQQQQHQPEL, and NQNQ…PRRR. 4 stretches are compositionally biased toward polar residues: residues 183–193, 227–254, 302–311, and 355–371; these read GSQTPTPTSAL, QRMMTQSSPLKRVTTPSQSPFVQQPQTM, KSDSVGGNSY, and YQKQKPVTPPLQSQNDS. Residues 372–395 show a composition bias toward low complexity; that stretch reads QQLEPLKTPQPQPKQQQQQQQPNN. Over residues 420-431 the composition is skewed to polar residues; the sequence is INGSPDWNSSPE. Composition is skewed to low complexity over residues 483 to 497 and 535 to 544; these read PHQQQHQQQQHQPEL and NQNQNQNQNQ. Positions 545-575 are enriched in polar residues; sequence TKTPYSQQSQFSPTHSNFNLSPAKQLNSNVG. 2 C2H2-type zinc fingers span residues 649 to 673 and 679 to 701; these read YTCTYKNCGKKFTRRYNVRSHIQTH and FGCQFCPKRFVRQHDLNRHVKGH.

The protein resides in the nucleus. Transcription factor involved in the RAM (regulation of ACE2 transcription factor and polarized morphogenesis) signaling network that regulates polarized morphogenesis. Regulates expression of genes involved in cell separation such as CHT3, DSE1, and SCW11; or other cell wall genes such as ASH1, DSE4, PIR1, PRY2, and RME1. Required for regulation of morphogenesis, cell separation, adherence, biofilm formation, invasion, as well as virulence in a mouse model of infection. The polypeptide is Cell wall transcription factor ACE2 (ACE2) (Candida albicans (strain SC5314 / ATCC MYA-2876) (Yeast)).